The sequence spans 95 residues: YcgL domain-containing protein APJL_0712 (95 aa).

The YcgL domain occupies 4–88; it reads HLCAIYKSPK…PPENLLKTFL (85 aa).

The sequence is that of YcgL domain-containing protein APJL_0712 from Actinobacillus pleuropneumoniae serotype 3 (strain JL03).